Here is a 588-residue protein sequence, read N- to C-terminus: Transcription factor tau 60 kDa subunit (588 aa).

The segment at 399–588 (LPKLPENFSM…VYCGTTLEVM (190 aa)) is sufficient for SPT15-binding.

As to quaternary structure, heterodimer with TFC6. Component of the TFIIIC complex composed of TFC1, TFC3, TFC4, TFC6, TFC7 and TFC8. The subunits are organized in two globular domains, tauA and tauB, connected by a proteolysis-sensitive and flexible linker. Interacts with SPT15 and directly with TFC6.

It localises to the nucleus. In terms of biological role, TFIIIC mediates tRNA and 5S RNA gene activation by binding to intragenic promoter elements. Upstream of the transcription start site, TFIIIC assembles the initiation complex TFIIIB-TFIIIC-tDNA, which is sufficient for RNA polymerase III recruitment and function. Part of the tauB domain of TFIIIC that binds boxB DNA promoter sites of tRNA and similar genes. Plays a role in TFIIB assembly through its interaction with SPT15/TBP. Essential for cell viability. This is Transcription factor tau 60 kDa subunit (TFC8) from Saccharomyces cerevisiae (strain ATCC 204508 / S288c) (Baker's yeast).